Here is a 602-residue protein sequence, read N- to C-terminus: Sensor histidine kinase AtsR (602 aa).

Transmembrane regions (helical) follow at residues 11 to 31 and 182 to 202; these read IIVA…FLLF and AIVM…LLLF. One can recognise a Histidine kinase domain in the interval 242–461; it reads MVSHELRTPL…EFVVTLPVEL (220 aa). His-245 bears the Phosphohistidine; by autocatalysis mark. Residues 484 to 601 enclose the Response regulatory domain; sequence HALVVDDNEN…TLNGIVSRLR (118 aa). 4-aspartylphosphate is present on Asp-533.

It localises to the cell inner membrane. The enzyme catalyses ATP + protein L-histidine = ADP + protein N-phospho-L-histidine.. In terms of biological role, member of a two-component regulatory system involved in control of gene expression; inhibits synthesis of (at least) the polyketide antibiotic thailandamide. Its two-component partner may be BTH_I0635. This Burkholderia thailandensis (strain ATCC 700388 / DSM 13276 / CCUG 48851 / CIP 106301 / E264) protein is Sensor histidine kinase AtsR.